Consider the following 121-residue polypeptide: U15-barytoxin-Tl1a (121 aa).

Positions Met1–Ala17 are cleaved as a signal peptide. Disulfide bonds link Cys56/Cys74, Cys67/Cys80, Cys71/Cys119, and Cys73/Cys90.

The protein belongs to the neurotoxin 03 (Tx2) family. 03 subfamily. In terms of tissue distribution, expressed by the venom gland.

Its subcellular location is the secreted. Ion channel inhibitor. This chain is U15-barytoxin-Tl1a, found in Trittame loki (Brush-footed trapdoor spider).